We begin with the raw amino-acid sequence, 274 residues long: Methionine-binding lipoprotein MetQ (274 aa).

Positions 1–19 are cleaved as a signal peptide; sequence MKKLFLGALLLVFAGVMAA. Residue Cys20 is the site of N-palmitoyl cysteine attachment. A lipid anchor (S-diacylglycerol cysteine) is attached at Cys20.

Belongs to the NlpA lipoprotein family. In terms of assembly, the complex is composed of two ATP-binding proteins (MetN), two transmembrane proteins (MetP) and a solute-binding protein (metQ).

The protein resides in the cell membrane. Part of the ABC transporter complex MetNPQ involved in methionine import. Binds the methionine and transfers it to the membrane-bound permease. It has also been shown to be involved in methionine sulfoxide transport. The chain is Methionine-binding lipoprotein MetQ (metQ) from Bacillus subtilis (strain 168).